The chain runs to 129 residues: Small ribosomal subunit protein uS9 (129 aa).

Belongs to the universal ribosomal protein uS9 family.

In Chlorobium luteolum (strain DSM 273 / BCRC 81028 / 2530) (Pelodictyon luteolum), this protein is Small ribosomal subunit protein uS9.